Here is a 224-residue protein sequence, read N- to C-terminus: Small ribosomal subunit protein uS3 (224 aa).

Positions 39–107 (IREFLKKKPS…DVWVEIAEVK (69 aa)) constitute a KH type-2 domain.

The protein belongs to the universal ribosomal protein uS3 family. Part of the 30S ribosomal subunit. Forms a tight complex with proteins S10 and S14.

Its function is as follows. Binds the lower part of the 30S subunit head. Binds mRNA in the 70S ribosome, positioning it for translation. The sequence is that of Small ribosomal subunit protein uS3 from Chlamydia trachomatis serovar D (strain ATCC VR-885 / DSM 19411 / UW-3/Cx).